The primary structure comprises 430 residues: Adenylosuccinate synthetase (430 aa).

GTP-binding positions include 13–19 (GDEGKGK) and 41–43 (GHT). Catalysis depends on D14, which acts as the Proton acceptor. Mg(2+) is bound by residues D14 and G41. IMP contacts are provided by residues 14–17 (DEGK), 39–42 (NAGH), T130, R144, Q225, T240, and R304. The Proton donor role is filled by H42. 300 to 306 (ASTGRPR) contributes to the substrate binding site. GTP is bound by residues R306, 332–334 (KLD), and 414–416 (STG).

This sequence belongs to the adenylosuccinate synthetase family. As to quaternary structure, homodimer. Requires Mg(2+) as cofactor.

The protein localises to the cytoplasm. The enzyme catalyses IMP + L-aspartate + GTP = N(6)-(1,2-dicarboxyethyl)-AMP + GDP + phosphate + 2 H(+). The protein operates within purine metabolism; AMP biosynthesis via de novo pathway; AMP from IMP: step 1/2. Its function is as follows. Plays an important role in the de novo pathway of purine nucleotide biosynthesis. Catalyzes the first committed step in the biosynthesis of AMP from IMP. The chain is Adenylosuccinate synthetase from Xylella fastidiosa (strain 9a5c).